A 154-amino-acid polypeptide reads, in one-letter code: Endoribonuclease YbeY (154 aa).

Positions 113, 117, and 123 each coordinate Zn(2+).

Belongs to the endoribonuclease YbeY family. The cofactor is Zn(2+).

The protein resides in the cytoplasm. Single strand-specific metallo-endoribonuclease involved in late-stage 70S ribosome quality control and in maturation of the 3' terminus of the 16S rRNA. This chain is Endoribonuclease YbeY, found in Vibrio cholerae serotype O1 (strain ATCC 39541 / Classical Ogawa 395 / O395).